The sequence spans 194 residues: Peptidyl-tRNA hydrolase (194 aa).

Residue Y17 participates in tRNA binding. H22 (proton acceptor) is an active-site residue. TRNA contacts are provided by Y68, N70, and N116.

Belongs to the PTH family. As to quaternary structure, monomer.

The protein resides in the cytoplasm. It catalyses the reaction an N-acyl-L-alpha-aminoacyl-tRNA + H2O = an N-acyl-L-amino acid + a tRNA + H(+). Hydrolyzes ribosome-free peptidyl-tRNAs (with 1 or more amino acids incorporated), which drop off the ribosome during protein synthesis, or as a result of ribosome stalling. Functionally, catalyzes the release of premature peptidyl moieties from peptidyl-tRNA molecules trapped in stalled 50S ribosomal subunits, and thus maintains levels of free tRNAs and 50S ribosomes. The sequence is that of Peptidyl-tRNA hydrolase from Pseudomonas paraeruginosa (strain DSM 24068 / PA7) (Pseudomonas aeruginosa (strain PA7)).